The primary structure comprises 1070 residues: DNA-directed RNA polymerase subunit beta (1070 aa).

This sequence belongs to the RNA polymerase beta chain family. In plastids the minimal PEP RNA polymerase catalytic core is composed of four subunits: alpha, beta, beta', and beta''. When a (nuclear-encoded) sigma factor is associated with the core the holoenzyme is formed, which can initiate transcription.

It is found in the plastid. The protein localises to the chloroplast. The enzyme catalyses RNA(n) + a ribonucleoside 5'-triphosphate = RNA(n+1) + diphosphate. Functionally, DNA-dependent RNA polymerase catalyzes the transcription of DNA into RNA using the four ribonucleoside triphosphates as substrates. This is DNA-directed RNA polymerase subunit beta from Gossypium barbadense (Sea Island cotton).